A 619-amino-acid chain; its full sequence is DNA mismatch repair protein MutL (619 aa).

It belongs to the DNA mismatch repair MutL/HexB family.

Its function is as follows. This protein is involved in the repair of mismatches in DNA. It is required for dam-dependent methyl-directed DNA mismatch repair. May act as a 'molecular matchmaker', a protein that promotes the formation of a stable complex between two or more DNA-binding proteins in an ATP-dependent manner without itself being part of a final effector complex. This Xylella fastidiosa (strain M23) protein is DNA mismatch repair protein MutL.